We begin with the raw amino-acid sequence, 347 residues long: Microfibril-associated glycoprotein 3 (347 aa).

Positions Met-1–Leu-22 are cleaved as a signal peptide. Topologically, residues Glu-23–Asp-139 are extracellular. 4 N-linked (GlcNAc...) asparagine glycosylation sites follow: Asn-31, Asn-36, Asn-63, and Asn-103. One can recognise an Ig-like C2-type domain in the interval Ala-47 to Thr-130. A disulfide bond links Cys-68 and Cys-117. The chain crosses the membrane as a helical span at residues Met-140–Val-160. Residues Thr-161–Glu-347 lie on the Cytoplasmic side of the membrane. The disordered stretch occupies residues Asn-280–Glu-347. Positions Val-311–Ser-331 are enriched in polar residues.

In terms of processing, glycosylated.

It localises to the cell membrane. Its function is as follows. Component of the elastin-associated microfibrils. The protein is Microfibril-associated glycoprotein 3 (Mfap3) of Rattus norvegicus (Rat).